The sequence spans 691 residues: Dipeptidyl peptidase 3 (691 aa).

Position 431 (histidine 431) interacts with Zn(2+). Residue glutamate 432 is part of the active site. Positions 436 and 492 each coordinate Zn(2+).

Belongs to the peptidase M49 family. The cofactor is Zn(2+).

Its subcellular location is the cytoplasm. It carries out the reaction Release of an N-terminal dipeptide from a peptide comprising four or more residues, with broad specificity. Also acts on dipeptidyl 2-naphthylamides.. This chain is Dipeptidyl peptidase 3 (dpp3-1), found in Dictyostelium discoideum (Social amoeba).